The primary structure comprises 332 residues: Adenine deaminase (332 aa).

3 residues coordinate Zn(2+): H16, H18, and H196. Residue E199 is the Proton donor of the active site. Zn(2+) is bound at residue D277. Residue D278 participates in substrate binding.

The protein belongs to the metallo-dependent hydrolases superfamily. Adenosine and AMP deaminases family. Adenine deaminase type 2 subfamily. Zn(2+) serves as cofactor.

It catalyses the reaction adenine + H2O + H(+) = hypoxanthine + NH4(+). Catalyzes the hydrolytic deamination of adenine to hypoxanthine. Plays an important role in the purine salvage pathway and in nitrogen catabolism. The chain is Adenine deaminase from Acinetobacter baylyi (strain ATCC 33305 / BD413 / ADP1).